Consider the following 110-residue polypeptide: Protein NATD1 (110 aa).

An N-acetyltransferase domain is found at 19–109 (EHDRKRRQFT…PLPQYLEHLQ (91 aa)).

Belongs to the NATD1 family.

The sequence is that of Protein NATD1 (NATD1) from Gallus gallus (Chicken).